Consider the following 513-residue polypeptide: Sphingolipid C9-methyltransferase (513 aa).

Helical transmembrane passes span 52-72 and 74-94; these read ILFS…GLGF and TWVF…WSIM. S-adenosyl-L-methionine-binding positions include 222–223, 259–267, 285–290, and 315–316; these read YT, VLDIGCGWG, TLGRNQ, and YR.

The protein belongs to the CFA/CMAS family.

Its subcellular location is the membrane. It catalyses the reaction a (4E,8E)-4-sphinga-4,8-dienine ceramide + S-adenosyl-L-methionine = a 9-methyl-(4E,8E)-sphinga-4,8-dienine ceramide + S-adenosyl-L-homocysteine + H(+). It functions in the pathway lipid metabolism; sphingolipid metabolism. Catalyzes methylation of the sphingoid base component of glucosylceramides (GluCers) at the C9-position. Sphingolipid C9-methylation requires 4,8-desaturated ceramides as substrates. Glucosylceramides play important roles in growth, differentiation and pathogenicity. The methyl group at the C9-position distinguishes fungal glucosylceramides from those of plants and animals, and may thus play a role in host-pathogen interactions enabling the host to recognize the fungal attack and initiate specific defense responses. Not necessary for vegetative growth at low temperatures, but plays a role in hyphal formation on solid medium. This Candida albicans (strain SC5314 / ATCC MYA-2876) (Yeast) protein is Sphingolipid C9-methyltransferase.